The sequence spans 388 residues: Probable proton-coupled zinc antiporter SLC30A3 (388 aa).

Positions 1–46 (MEPSPAAGGLETTRLVSPRDRGGAGGSLRLKSLFTEPSEPLPEESK) are disordered. Residues 1-75 (MEPSPAAGGL…TPERLHARRQ (75 aa)) are Cytoplasmic-facing. A helical transmembrane segment spans residues 76 to 96 (LYAACAVCFVFMAGEVVGGYL). Topologically, residues 97 to 105 (AHSLAIMTD) are lumenal. A helical transmembrane segment spans residues 106–126 (AAHLLADVGSMMGSLFSLWLS). Residues His108 and Asp112 each coordinate Zn(2+). The Cytoplasmic portion of the chain corresponds to 127–145 (TRPATRTMTFGWHRSETLG). Residues 146–166 (ALASVVSLWMVTGILLYLAFV) form a helical membrane-spanning segment. Residues 167 to 177 (RLLHSDYHIEG) are Lumenal-facing. The helical transmembrane segment at 178–198 (GAMLLTASIAVCANLLMAFVL) threads the bilayer. At 199-235 (HQAGPPHSHGSRGAEYAPLEEGPEEPLPLGNTSVRAA) the chain is on the cytoplasmic side. Residues 236-256 (FVHVLGDLLQSFGVLAASILI) form a helical membrane-spanning segment. Residues His238 and Asp242 each coordinate Zn(2+). The Lumenal portion of the chain corresponds to 257 to 264 (YFKPQYKA). The chain crosses the membrane as a helical span at residues 265-285 (ADPISTFLFSICALGSTAPTL). Residues 286-388 (RDVLRILMEG…CLRCQEPPQA (103 aa)) are Cytoplasmic-facing. A Dityrosine (Tyr-Tyr) (interchain with Y-372) cross-link involves residue Tyr357. Tyr372 participates in a covalent cross-link: Dityrosine (Tyr-Tyr) (interchain with Y-357).

The protein belongs to the cation diffusion facilitator (CDF) transporter (TC 2.A.4) family. SLC30A subfamily. Homodimer; dityrosine-linked. Homodimerization seems specific of the human protein and enhances the zinc transport efficiency. Interacts with TMEM163. Post-translationally, homodimerization through dityrosine bonds is stimulated by oxidative stress.

It is found in the cytoplasmic vesicle. It localises to the secretory vesicle. The protein resides in the synaptic vesicle membrane. Its subcellular location is the synapse. The protein localises to the synaptosome. It is found in the late endosome membrane. It localises to the lysosome membrane. The enzyme catalyses Zn(2+)(in) + 2 H(+)(out) = Zn(2+)(out) + 2 H(+)(in). Its function is as follows. Probable proton-coupled zinc ion antiporter mediating the import of zinc from cytoplasm into synaptic vesicles and participating to cellular zinc ion homeostasis in the brain. The sequence is that of Probable proton-coupled zinc antiporter SLC30A3 from Homo sapiens (Human).